Reading from the N-terminus, the 113-residue chain is Hydrogenase maturation factor HypA 1 (113 aa).

His2 is a binding site for Ni(2+). Zn(2+) is bound by residues Cys73, Cys76, Cys89, and Cys92.

This sequence belongs to the HypA/HybF family.

Functionally, involved in the maturation of [NiFe] hydrogenases. Required for nickel insertion into the metal center of the hydrogenase. The polypeptide is Hydrogenase maturation factor HypA 1 (Bradyrhizobium diazoefficiens (strain JCM 10833 / BCRC 13528 / IAM 13628 / NBRC 14792 / USDA 110)).